The following is a 324-amino-acid chain: Glutathione synthetase (324 aa).

The 185-residue stretch at K129–V313 folds into the ATP-grasp domain. V155–G211 contacts ATP. Positions 284 and 286 each coordinate Mg(2+).

The protein belongs to the prokaryotic GSH synthase family. The cofactor is Mg(2+). Mn(2+) serves as cofactor.

The enzyme catalyses gamma-L-glutamyl-L-cysteine + glycine + ATP = glutathione + ADP + phosphate + H(+). It functions in the pathway sulfur metabolism; glutathione biosynthesis; glutathione from L-cysteine and L-glutamate: step 2/2. The sequence is that of Glutathione synthetase from Gloeobacter violaceus (strain ATCC 29082 / PCC 7421).